We begin with the raw amino-acid sequence, 347 residues long: Ribosomal RNA small subunit methyltransferase C (347 aa).

This sequence belongs to the methyltransferase superfamily. RsmC family. As to quaternary structure, monomer.

Its subcellular location is the cytoplasm. It carries out the reaction guanosine(1207) in 16S rRNA + S-adenosyl-L-methionine = N(2)-methylguanosine(1207) in 16S rRNA + S-adenosyl-L-homocysteine + H(+). Its function is as follows. Specifically methylates the guanine in position 1207 of 16S rRNA in the 30S particle. The protein is Ribosomal RNA small subunit methyltransferase C of Shewanella putrefaciens (strain CN-32 / ATCC BAA-453).